The sequence spans 366 residues: MTPSMLPTEHYDDQLSEKIHRLEQMMQPFGAPAVQPFRSPVSHYRMRAEFRIWHDGDDLYHIMFDPQSKQRIRVDQFPAASELINRLMPLLLDALRPNPTLRHKLFQIDYLSTRSGQIIVSLLYHRTLDDAWKQAAEALRDALRGQGFAIQLIGRASKTKICLDQDWVDEVLPVAGRQMIYRQVENSFTQPNAAINIQMLEWALDATRGAEGDLLELYCGNGNFSLALAHNFRQVLATEIAKPSVAAAQYNIAANQINNVQIIRMSAEEFTQAMQGVRAFNRLQGIDLHSYECNTIFVDPPRSGLDTETLGMVQGYPNILYISCNPLTLCDNLHTLNQSHRITRLALFDQFPYTHHMECGVLLERR.

The S-adenosyl-L-methionine site is built by Q190, Y218, N223, E239, and D299. The active-site Nucleophile is C324. E358 functions as the Proton acceptor in the catalytic mechanism.

It belongs to the class I-like SAM-binding methyltransferase superfamily. RNA M5U methyltransferase family. TrmA subfamily.

It carries out the reaction uridine(54) in tRNA + S-adenosyl-L-methionine = 5-methyluridine(54) in tRNA + S-adenosyl-L-homocysteine + H(+). It catalyses the reaction uridine(341) in tmRNA + S-adenosyl-L-methionine = 5-methyluridine(341) in tmRNA + S-adenosyl-L-homocysteine + H(+). Dual-specificity methyltransferase that catalyzes the formation of 5-methyluridine at position 54 (m5U54) in all tRNAs, and that of position 341 (m5U341) in tmRNA (transfer-mRNA). The sequence is that of tRNA/tmRNA (uracil-C(5))-methyltransferase from Edwardsiella ictaluri (strain 93-146).